We begin with the raw amino-acid sequence, 142 residues long: gSG7 salivary protein (142 aa).

The N-terminal stretch at 1–26 (MAARMTIMLPLAVALICLLQTEPGMA) is a signal peptide. Cystine bridges form between Cys84/Cys139 and Cys107/Cys117.

The protein localises to the secreted. Functionally, salivary protein that moderately inhibits the alternative pathway for complement system activation in the host. This is gSG7 salivary protein from Anopheles darlingi (Mosquito).